Reading from the N-terminus, the 743-residue chain is NAD(P)H-quinone oxidoreductase subunit 5, chloroplastic (743 aa).

The next 14 helical transmembrane spans lie at 9–29, 40–60, 89–109, 125–145, 147–167, 184–204, 219–239, 258–278, 280–300, 396–416, 425–445, 548–568, 607–627, and 723–743; these read WIIPFVPLPVPMLIGVGLLLF, WAFHSVLLLSIVMIFSIDLSI, IDPLTSIMLILITTVGIMVLI, FAYMSFFSTSMLGLVTSSNLI, IYIFWELVGMCSYLLIGFWFT, IGDLGLLLGILGFYWITGSFE, NEVNLVFLTICAVLLFAGAVA, TPISALIHAATMVAAGIFLVA, LLPLFIVIPYILNLISFIGII, TAFFLGTLSLCGIPPLACFWS, WLYSPIFAIIACSTAGLTAFY, LLPLLVLVLFTLFVGAIGIPF, IFSVSIAYFGIVIASFLYKPV, and YLFLYLSYVSIFLLIYYFLNL.

It belongs to the complex I subunit 5 family. In terms of assembly, NDH is composed of at least 16 different subunits, 5 of which are encoded in the nucleus.

Its subcellular location is the plastid. The protein resides in the chloroplast thylakoid membrane. The catalysed reaction is a plastoquinone + NADH + (n+1) H(+)(in) = a plastoquinol + NAD(+) + n H(+)(out). It carries out the reaction a plastoquinone + NADPH + (n+1) H(+)(in) = a plastoquinol + NADP(+) + n H(+)(out). NDH shuttles electrons from NAD(P)H:plastoquinone, via FMN and iron-sulfur (Fe-S) centers, to quinones in the photosynthetic chain and possibly in a chloroplast respiratory chain. The immediate electron acceptor for the enzyme in this species is believed to be plastoquinone. Couples the redox reaction to proton translocation, and thus conserves the redox energy in a proton gradient. This is NAD(P)H-quinone oxidoreductase subunit 5, chloroplastic (ndhF) from Carpenteria californica (Tree anemone).